We begin with the raw amino-acid sequence, 166 residues long: NADH-ubiquinone oxidoreductase chain 6 (166 aa).

5 consecutive transmembrane segments (helical) span residues 1–21 (MMYF…AFAS), 26–46 (IYGG…IVSL), 47–67 (GGSF…LVVF), 86–106 (TVVL…YEFF), and 139–159 (CGGW…FVVL).

Belongs to the complex I subunit 6 family. As to quaternary structure, core subunit of respiratory chain NADH dehydrogenase (Complex I) which is composed of 45 different subunits.

The protein localises to the mitochondrion inner membrane. It carries out the reaction a ubiquinone + NADH + 5 H(+)(in) = a ubiquinol + NAD(+) + 4 H(+)(out). Its function is as follows. Core subunit of the mitochondrial membrane respiratory chain NADH dehydrogenase (Complex I) which catalyzes electron transfer from NADH through the respiratory chain, using ubiquinone as an electron acceptor. Essential for the catalytic activity and assembly of complex I. This Tachyglossus aculeatus aculeatus (Southeast Australian short-beaked echidna) protein is NADH-ubiquinone oxidoreductase chain 6 (MT-ND6).